Reading from the N-terminus, the 182-residue chain is uncharacterized protein (182 aa).

2 consecutive transmembrane segments (helical) span residues isoleucine 58–tyrosine 78 and proline 81–tryptophan 101.

This sequence to M.jannaschii MJ0803.

It is found in the cell membrane. This is an uncharacterized protein from Methanocaldococcus jannaschii (strain ATCC 43067 / DSM 2661 / JAL-1 / JCM 10045 / NBRC 100440) (Methanococcus jannaschii).